Here is a 2339-residue protein sequence, read N- to C-terminus: Inverse autotransporter adhesin YeeJ (2339 aa).

Residues 1–26 (MGIKLRRLTAGICLITQLAFPMAAAA) form the signal peptide. Residues 50-98 (VPYTLGALESAQSVAERFGISVAELRKLNQFRTFARGFDNVRQGDELDV) form the LysM domain. Residues 125–400 (TSQQIGSLLA…SRYDLVDRNN (276 aa)) form an inverse autotransporter region. The interval 513-605 (QKDSSVSLST…GVDAAKAPAV (93 aa)) is invasin 3 domain. Big-1 domains lie at 721 to 815 (IATL…VSFV), 822 to 913 (QVDL…VNFI), 920 to 1017 (ALTL…MTFV), 1024 to 1121 (VVVL…VTFV), 1128 to 1221 (QVVL…VHFI), 1229 to 1331 (IIEL…SINV), 1339 to 1432 (HLTL…VTYV), 1439 to 1535 (EITL…VNFI), 1542 to 1639 (QVNL…VTLI), 1646 to 1730 (KLAS…PTEV), 1746 to 1837 (ITSL…LEAI), 1840 to 1934 (KLTL…VKVT), and 1942 to 2034 (VASF…ITLV). The segment at 2236 to 2339 (KSWWVNAGEA…FAYATCYKNL (104 aa)) is C-type lectin domain.

The protein belongs to the intimin/invasin family.

It is found in the cell outer membrane. A cryptic inverse autotransporter, it is not expressed in wild-type strain MG1655. Upon overexpression shows increased adherence to polyvinyl chloride (PVC) plates and increased mature biofilm formation. Probably binds peptidoglycan. The polypeptide is Inverse autotransporter adhesin YeeJ (yeeJ) (Escherichia coli (strain K12)).